Reading from the N-terminus, the 242-residue chain is Aliphatic sulfonates import ATP-binding protein SsuB 1 (242 aa).

The ABC transporter domain maps to 11–227 (VAVRRLSRAF…RPSHPDFEDL (217 aa)). 43 to 50 (GESGSGKT) serves as a coordination point for ATP.

It belongs to the ABC transporter superfamily. Aliphatic sulfonates importer (TC 3.A.1.17.2) family. As to quaternary structure, the complex is composed of two ATP-binding proteins (SsuB), two transmembrane proteins (SsuC) and a solute-binding protein (SsuA).

Its subcellular location is the cell inner membrane. The catalysed reaction is ATP + H2O + aliphatic sulfonate-[sulfonate-binding protein]Side 1 = ADP + phosphate + aliphatic sulfonateSide 2 + [sulfonate-binding protein]Side 1.. In terms of biological role, part of the ABC transporter complex SsuABC involved in aliphatic sulfonates import. Responsible for energy coupling to the transport system. This is Aliphatic sulfonates import ATP-binding protein SsuB 1 from Paracoccus denitrificans (strain Pd 1222).